Reading from the N-terminus, the 253-residue chain is Demethylmenaquinone methyltransferase (253 aa).

S-adenosyl-L-methionine contacts are provided by residues Thr-75, Asp-96, and 124 to 125; that span reads DA.

The protein belongs to the class I-like SAM-binding methyltransferase superfamily. MenG/UbiE family.

It carries out the reaction a 2-demethylmenaquinol + S-adenosyl-L-methionine = a menaquinol + S-adenosyl-L-homocysteine + H(+). The protein operates within quinol/quinone metabolism; menaquinone biosynthesis; menaquinol from 1,4-dihydroxy-2-naphthoate: step 2/2. Its function is as follows. Methyltransferase required for the conversion of demethylmenaquinol (DMKH2) to menaquinol (MKH2). The polypeptide is Demethylmenaquinone methyltransferase (Desulfitobacterium hafniense (strain Y51)).